The primary structure comprises 621 residues: Chaperone protein HscA homolog (621 aa).

Belongs to the heat shock protein 70 family.

Chaperone involved in the maturation of iron-sulfur cluster-containing proteins. Has a low intrinsic ATPase activity which is markedly stimulated by HscB. This is Chaperone protein HscA homolog from Polynucleobacter necessarius subsp. necessarius (strain STIR1).